Reading from the N-terminus, the 311-residue chain is MKKTNFLSFGCYLPKKVLTNFDLEELVDTSDEWILRRTGIKTRYIAEEEDVCELAFRASLNCLERAMHFSQKEVDAIIVATCTANKRLPAVANMLQARLGIGRHILSFDVNAACTGFLYALSIVDAMIVSGKVSTVLLVGAEAMSTIIDWNDRNTCVLFGDGAGAVLVSAGDSGGVLYEHMACDSSLGEALLAEVGGTLKMDGRSVFEAAIKRLTLAIGEALKTTGISVEELDYFIMHQANIRIIELIGEKIGIDRSKIIVTVDRYANTSAASIPITLAYMDSHGSIRKGAKILFAAMGAGFTYGVTIFEY.

Active-site residues include cysteine 114 and histidine 238. An ACP-binding region spans residues 239–243; that stretch reads QANIR. Asparagine 268 is an active-site residue.

It belongs to the thiolase-like superfamily. FabH family. Homodimer.

Its subcellular location is the cytoplasm. The catalysed reaction is malonyl-[ACP] + acetyl-CoA + H(+) = 3-oxobutanoyl-[ACP] + CO2 + CoA. It functions in the pathway lipid metabolism; fatty acid biosynthesis. In terms of biological role, catalyzes the condensation reaction of fatty acid synthesis by the addition to an acyl acceptor of two carbons from malonyl-ACP. Catalyzes the first condensation reaction which initiates fatty acid synthesis and may therefore play a role in governing the total rate of fatty acid production. Possesses both acetoacetyl-ACP synthase and acetyl transacylase activities. Its substrate specificity determines the biosynthesis of branched-chain and/or straight-chain of fatty acids. This Neorickettsia sennetsu (strain ATCC VR-367 / Miyayama) (Ehrlichia sennetsu) protein is Beta-ketoacyl-[acyl-carrier-protein] synthase III.